We begin with the raw amino-acid sequence, 316 residues long: M-phase inducer phosphatase cdc-25.3 (316 aa).

The interval 35-65 (QNRQHSSAISHISNSSPPTRKRSIDGGYTSG) is disordered. Residues 39-50 (HSSAISHISNSS) are compositionally biased toward low complexity. The 107-residue stretch at 136–242 (FMQKYILIDC…FYAFTRGLEK (107 aa)) folds into the Rhodanese domain.

It belongs to the MPI phosphatase family.

The catalysed reaction is O-phospho-L-tyrosyl-[protein] + H2O = L-tyrosyl-[protein] + phosphate. The chain is M-phase inducer phosphatase cdc-25.3 (cdc-25.3) from Caenorhabditis elegans.